The primary structure comprises 586 residues: Urease subunit alpha (586 aa).

Residues 134 to 586 form the Urease domain; that stretch reads GAIDTHIHFI…LPMAQRYFLF (453 aa). Ni(2+) contacts are provided by His139, His141, and Lys222. Residue Lys222 is modified to N6-carboxylysine. His224 is a substrate binding site. His251 and His277 together coordinate Ni(2+). His325 acts as the Proton donor in catalysis. Asp365 contributes to the Ni(2+) binding site.

It belongs to the metallo-dependent hydrolases superfamily. Urease alpha subunit family. As to quaternary structure, heterotrimer of UreA (gamma), UreB (beta) and UreC (alpha) subunits. Three heterotrimers associate to form the active enzyme. Ni cation serves as cofactor. Post-translationally, carboxylation allows a single lysine to coordinate two nickel ions.

The protein localises to the cytoplasm. The catalysed reaction is urea + 2 H2O + H(+) = hydrogencarbonate + 2 NH4(+). The protein operates within nitrogen metabolism; urea degradation; CO(2) and NH(3) from urea (urease route): step 1/1. This chain is Urease subunit alpha, found in Gloeothece citriformis (strain PCC 7424) (Cyanothece sp. (strain PCC 7424)).